A 369-amino-acid polypeptide reads, in one-letter code: Cytochrome P450 monooxygenase apf8 (369 aa).

Cys-303 serves as a coordination point for heme.

It belongs to the cytochrome P450 family. Heme is required as a cofactor.

Its pathway is secondary metabolite biosynthesis. In terms of biological role, cytochrome P450 monooxygenase; part of the gene cluster that mediates the biosynthesis of the cyclic tetrapeptide apicidin F (APF). The non-ribosomal peptide synthetase apf1 incorporates four different amino acids to produce apicidin F: L-phenylalanine, D-pipecolic acid (D-pip), N-methoxy-L-tryptophan and L-2-aminooctanedioic acid. L-Phenylalanine is the only proteinogenic amino acid directly used by apf1. The 3 other apf1 substrates are non-proteinogenic and have to be modified by other enzymes of the cluster. Lysine is converted to delta-1-pyrroline-5-carboxylate (P5C) which is reduced to L-pipecolic acid (L-pip) by apf3. L-pip is epimerized to D-pip, probably by apf1 activity, prior to incorporation. L-Tryptophan is N-oxidyzed by one of the cytochrome P450 monooxygenases (apf7 or apf8), and further methylated at the hydroxy group by the O-methyltransferase apf6 to yield N-methoxy-L-tryptophan. The synthesis of the fourth apf1 substrate is more complex. The fatty acid synthase apf5 is involved in the synthesis of the octanoic acid backbone of L-2-aminooctanedioic acid by fixing one acetyl-CoA unit and three malonyl-CoA units. Then one of the cytochrome P450 monooxygenases (apf7 or apf8) may oxidize this backbone to 2-oxooctanoic acid. The aminotransferase apf4 is predicted to catalyze the exchange of the keto group with an amino group. The next step would be the oxidation of 2-aminooctanoic acid by one of the cytochrome P450 monooxygenases (apf7 or apf8). The last step is the oxidation of 2-amino-8-hydroxyoctanoic acid to 2-aminooctanedioic acid is catalyzed by the FAD-dependent monooxygenase apf9. This chain is Cytochrome P450 monooxygenase apf8, found in Gibberella fujikuroi (strain CBS 195.34 / IMI 58289 / NRRL A-6831) (Bakanae and foot rot disease fungus).